The chain runs to 346 residues: Upstream stimulatory factor 2 (346 aa).

Disordered regions lie at residues 1 to 44 and 215 to 244; these read MDML…PGAE and APRTHPYSPKIDGTRTPRDERRRAQHNEVE. The span at 11 to 20 shows a compositional bias: low complexity; that stretch reads AASATAAAAA. Residues 226–244 are compositionally biased toward basic and acidic residues; the sequence is DGTRTPRDERRRAQHNEVE. The bHLH domain maps to 235–290; the sequence is RRRAQHNEVERRRRDKINNWIVQLSKIIPDCNADNSKTGASKGGILSKACDYIREL. The segment at 307-328 is leucine-zipper; the sequence is LQMDNELLRQQIEELKNENALL.

Interacts with MAF. Efficient DNA binding requires dimerization with another bHLH protein. Binds DNA as a homodimer or a heterodimer (USF1/USF2). In vivo, the USF1/USF2A heterodimer represents over 66% of the usf binding activity whereas the USF1 and USF2A homodimers represent less than 10%. The USF1/USF2B heterodimer accounted for almost 15% in some cell. In terms of tissue distribution, ubiquitous.

It is found in the nucleus. Its function is as follows. Transcription factor that binds to a symmetrical DNA sequence (E-boxes) (5'-CACGTG-3') that is found in a variety of viral and cellular promoters. The sequence is that of Upstream stimulatory factor 2 (USF2) from Homo sapiens (Human).